Consider the following 86-residue polypeptide: MNTIVLFLTLLILVSSCTSIVMKSSNSKERTYPVTPALNPLTGQHSLRQRQLIFCDECANACFRRKKPVRSCQRFICRCAIRDVGY.

Residues 1-19 (MNTIVLFLTLLILVSSCTS) form the signal peptide. 3 disulfide bridges follow: Cys55-Cys72, Cys58-Cys77, and Cys62-Cys79.

The protein belongs to the DEFL family.

The protein resides in the secreted. In Arabidopsis thaliana (Mouse-ear cress), this protein is Putative defensin-like protein 211.